The sequence spans 397 residues: Decapping and exoribonuclease protein (397 aa).

Substrate-binding positions include arginine 58, glutamate 101, and 131 to 133 (WRG). Glutamate 192 provides a ligand contact to Mg(2+). Residues cysteine 217 and glutamate 234 each coordinate substrate. Mg(2+)-binding residues include glutamate 234, aspartate 236, glutamate 253, and leucine 254. 2 residues coordinate substrate: lysine 255 and glutamine 280. Threonine 392 bears the Phosphothreonine mark. Serine 394 is subject to Phosphoserine.

It belongs to the DXO/Dom3Z family. Requires Mg(2+) as cofactor.

It is found in the nucleus. It catalyses the reaction a 5'-end triphospho-ribonucleoside in mRNA + H2O = a 5'-end phospho-ribonucleoside in mRNA + diphosphate + H(+). The catalysed reaction is a 5'-end NAD(+)-phospho-ribonucleoside in mRNA + H2O = a 5'-end phospho-ribonucleoside in mRNA + NAD(+) + H(+). It carries out the reaction a 5'-end NAD(+)-phospho-ribonucleoside in snoRNA + H2O = a 5'-end phospho-ribonucleoside in snoRNA + NAD(+) + H(+). The enzyme catalyses a 5'-end (N(7)-methyl 5'-triphosphoguanosine)-ribonucleoside-ribonucleotide in mRNA + H2O = a (N(7)-methyl 5'-triphosphoguanosine)-nucleoside + a 5'-end phospho-ribonucleoside in mRNA + H(+). It catalyses the reaction a 5'-end FAD-phospho-ribonucleoside in mRNA + H2O = a 5'-end phospho-ribonucleoside in mRNA + FAD + H(+). The catalysed reaction is a 5'-end CoA-ribonucleoside in mRNA + H2O = 3'-dephospho-CoA + a 5'-end phospho-ribonucleoside in mRNA + H(+). Its function is as follows. Decapping enzyme for NAD-capped RNAs: specifically hydrolyzes the nicotinamide adenine dinucleotide (NAD) cap from a subset of RNAs by removing the entire NAD moiety from the 5'-end of an NAD-capped RNA. The NAD-cap is present at the 5'-end of some RNAs and snoRNAs. In contrast to the canonical 5'-end N7 methylguanosine (m7G) cap, the NAD cap promotes mRNA decay. Preferentially acts on NAD-capped transcripts in response to environmental stress. Also acts as a non-canonical decapping enzyme that removes the entire cap structure of m7G capped or incompletely capped RNAs and mediates their subsequent degradation. Specifically degrades pre-mRNAs with a defective 5'-end m7G cap and is part of a pre-mRNA capping quality control. Has decapping activity toward incomplete 5'-end m7G cap mRNAs such as unmethylated 5'-end-capped RNA (cap0), while it has no activity toward 2'-O-ribose methylated m7G cap (cap1). In contrast to canonical decapping enzymes DCP2 and NUDT16, which cleave the cap within the triphosphate linkage, the decapping activity releases the entire cap structure GpppN and a 5'-end monophosphate RNA. Also has 5'-3' exoribonuclease activities: The 5'-end monophosphate RNA is then degraded by the 5'-3' exoribonuclease activity, enabling this enzyme to decap and degrade incompletely capped mRNAs. Also possesses RNA 5'-pyrophosphohydrolase activity by hydrolyzing the 5'-end triphosphate to release pyrophosphates. Exhibits decapping activity towards FAD-capped RNAs. Exhibits decapping activity towards dpCoA-capped RNAs in vitro. The sequence is that of Decapping and exoribonuclease protein from Rattus norvegicus (Rat).